A 210-amino-acid polypeptide reads, in one-letter code: Imidazole glycerol phosphate synthase subunit HisH 1 (210 aa).

The 208-residue stretch at 3-210 folds into the Glutamine amidotransferase type-1 domain; sequence KIAIVDYGMC…LDNFLSFSNV (208 aa). Cys82 (nucleophile) is an active-site residue. Residues His189 and Glu191 contribute to the active site.

As to quaternary structure, heterodimer of HisH and HisF.

It is found in the cytoplasm. It catalyses the reaction 5-[(5-phospho-1-deoxy-D-ribulos-1-ylimino)methylamino]-1-(5-phospho-beta-D-ribosyl)imidazole-4-carboxamide + L-glutamine = D-erythro-1-(imidazol-4-yl)glycerol 3-phosphate + 5-amino-1-(5-phospho-beta-D-ribosyl)imidazole-4-carboxamide + L-glutamate + H(+). The catalysed reaction is L-glutamine + H2O = L-glutamate + NH4(+). The protein operates within amino-acid biosynthesis; L-histidine biosynthesis; L-histidine from 5-phospho-alpha-D-ribose 1-diphosphate: step 5/9. Its function is as follows. IGPS catalyzes the conversion of PRFAR and glutamine to IGP, AICAR and glutamate. The HisH subunit provides the glutamine amidotransferase activity that produces the ammonia necessary to HisF for the synthesis of IGP and AICAR. The chain is Imidazole glycerol phosphate synthase subunit HisH 1 (hisH1) from Parasynechococcus marenigrum (strain WH8102).